Reading from the N-terminus, the 1031-residue chain is MADPAECNIKVVCRVRPMNATEQNTSHICTKFISEEQVQIGGKLNMFDRIFKPNTTQEEVYNKAARQIVKDVLDGYNGTIFAYGQTSSGKTFTMEGVMGNPQYMGIIPRIVQDIFNHIYQMDESLEFHIKVSYFEIYMDRIRDLLDVSKTNLSVHEDKNRVPFVKGATERFASSPEEVMDVIEEGKSNRHIAVTNMNEHSSRSHSIFLIQVKQENMETKKKLSGKLYLVDLAGSEKVSKTGAEGTVLDEAKNINKSLSALGNVISALADGKKSHIPYRDSKMTRILQESLGGNARTTIVICCSPSSFNESESKSTLMFGQRAKTIKNTVTVNMELTAEEWRNRYEKEKEKNGRLKAQLLILENELQRWRAGESVPVKEQGNKNDEILKEMMKPKQMTVHVSEEEKNKWEEEKVKLYEQLDEKDSEIDNQSRLTEKLKQQMLEQEELLSSMQRDYELLQSQMGRLEAENAAAKEEAKEVLQALEEMAVNYDEKSKEVEDKNRMNETLSEEVNEKMTALHTTSTELQKLQELEQHQRRRITEMMASLLKDLGEIGTALGGNAADMKPNVENIEKVDEEFTMARLFVSKMKTEVKTMSQRCKILEASNAENETKIRTSEDELDSCRMTIQQHEAKMKSLSENIRETEGKKRHLEDSLDMLNEEIVKLRAAEEIRLTDQEDKKREEEDKMQSATEMQASMSEQMESHRDAHQKQLANLRTEINEKEHQMEELKDVNQRMTLQHEKLQLDYEKLKIEEAEKAAKLRELSQQFDRREQAKQDLKGLEETVAKELQTLHNLRKLFVSDLQNRVKKALEGGDRDDDSGGSQAQKQKISFLENNLEQLTKVHKQLVRDNADLRCELPKLERRLRATSERVKALEMSLKETKEGAMRDRKRYQQEVDRIREAVRQRNFAKRGSSAQIAKAIRAGHPPPSPGGSTGIRGGGYSGIRGGGSPVIRPPSHGSPEPISHNNSFEKSLNPNDAENMEKKANKRLPKLPPGGNKLTESDIAAMKARSKARNNTPGKAPLTTSGEQGS.

The Kinesin motor domain maps to 8–325 (NIKVVCRVRP…LMFGQRAKTI (318 aa)). 84–91 (GQTSSGKT) contributes to the ATP binding site. Positions 393 to 857 (PKQMTVHVSE…RDNADLRCEL (465 aa)) form a coiled coil. The segment covering 673–686 (TDQEDKKREEEDKM) has biased composition (basic and acidic residues). 2 disordered regions span residues 673 to 692 (TDQEDKKREEEDKMQSATEM) and 906 to 1031 (RNFA…EQGS). Positions 858–1031 (PKLERRLRAT…PLTTSGEQGS (174 aa)) are globular. The segment covering 932–949 (GSTGIRGGGYSGIRGGGS) has biased composition (gly residues). Composition is skewed to polar residues over residues 964-977 (SHNNSFEKSLNPND) and 1014-1031 (RNNTPGKAPLTTSGEQGS).

It belongs to the TRAFAC class myosin-kinesin ATPase superfamily. Kinesin family. Kinesin subfamily. As to quaternary structure, oligomer composed of two heavy chains and two light chains.

It localises to the cytoplasm. The protein resides in the cytoskeleton. Its function is as follows. Kinesin is a microtubule-associated force-producing protein that may play a role in organelle transport. This Strongylocentrotus purpuratus (Purple sea urchin) protein is Kinesin heavy chain.